The primary structure comprises 192 residues: uncharacterized protein (192 aa).

Residues 29 to 160 form the Nudix hydrolase domain; that stretch reads HRQAAVLIPI…PLDIYRRGDS (132 aa). The Nudix box signature appears at 67–89; it reads GAVDDTDASVIAAALREAEEEVA. Residues Glu83 and Glu87 each coordinate Mg(2+).

Belongs to the Nudix hydrolase family. PCD1 subfamily. Mn(2+) is required as a cofactor. The cofactor is Mg(2+).

Its function is as follows. Probably mediates the hydrolysis of some nucleoside diphosphate derivatives. This is an uncharacterized protein from Escherichia coli O139:H28 (strain E24377A / ETEC).